We begin with the raw amino-acid sequence, 273 residues long: Ribosomal RNA small subunit methyltransferase A (273 aa).

S-adenosyl-L-methionine contacts are provided by N17, L19, G44, E65, and N111.

The protein belongs to the class I-like SAM-binding methyltransferase superfamily. rRNA adenine N(6)-methyltransferase family. RsmA subfamily.

It is found in the cytoplasm. It carries out the reaction adenosine(1518)/adenosine(1519) in 16S rRNA + 4 S-adenosyl-L-methionine = N(6)-dimethyladenosine(1518)/N(6)-dimethyladenosine(1519) in 16S rRNA + 4 S-adenosyl-L-homocysteine + 4 H(+). Functionally, specifically dimethylates two adjacent adenosines (A1518 and A1519) in the loop of a conserved hairpin near the 3'-end of 16S rRNA in the 30S particle. May play a critical role in biogenesis of 30S subunits. The polypeptide is Ribosomal RNA small subunit methyltransferase A (Buchnera aphidicola subsp. Acyrthosiphon pisum (strain APS) (Acyrthosiphon pisum symbiotic bacterium)).